Here is a 517-residue protein sequence, read N- to C-terminus: Peptide chain release factor 3 (517 aa).

Residues 9 to 269 (AKRRTFAIIS…DFVEHAPAPR (261 aa)) enclose the tr-type G domain. GTP is bound by residues 18–25 (SHPDAGKT), 86–90 (DTPGH), and 140–143 (NKLD).

This sequence belongs to the TRAFAC class translation factor GTPase superfamily. Classic translation factor GTPase family. PrfC subfamily.

The protein localises to the cytoplasm. In terms of biological role, increases the formation of ribosomal termination complexes and stimulates activities of RF-1 and RF-2. It binds guanine nucleotides and has strong preference for UGA stop codons. It may interact directly with the ribosome. The stimulation of RF-1 and RF-2 is significantly reduced by GTP and GDP, but not by GMP. The chain is Peptide chain release factor 3 from Halorhodospira halophila (strain DSM 244 / SL1) (Ectothiorhodospira halophila (strain DSM 244 / SL1)).